Consider the following 403-residue polypeptide: Cystinosin homolog (403 aa).

Over 1–122 (MKLPVSILFF…YSRITVIRSH (122 aa)) the chain is Lumenal. Asn45, Asn52, Asn78, and Asn96 each carry an N-linked (GlcNAc...) asparagine glycan. A helical transmembrane segment spans residues 123-143 (WLAILIQIVGWTYFAAWSVSF). The region spanning 124–190 (LAILIQIVGW…MYYNSHVKNI (67 aa)) is the PQ-loop 1 domain. Over 144–162 (YPQMYLNFKRKSVVGLNFD) the chain is Cytoplasmic. A helical transmembrane segment spans residues 163 to 183 (FLSLNLVGFGAYAMFNLLMYY). The Lumenal portion of the chain corresponds to 184-206 (NSHVKNIYSMENPRSPPPVLLND). A helical membrane pass occupies residues 207–227 (VVFAVHAFLACFVTILQCIFY). The Cytoplasmic portion of the chain corresponds to 228-237 (ERDQQRISTK). Residues 238–258 (CIILIIGLVSFGFVSVVVTVL) traverse the membrane as a helical segment. The Lumenal portion of the chain corresponds to 259 to 260 (NK). A helical transmembrane segment spans residues 261-283 (ITILDFVVSLSYIKMAVTCCKYF). The PQ-loop 2 domain maps to 266 to 326 (FVVSLSYIKM…MVLQAINVND (61 aa)). The Cytoplasmic portion of the chain corresponds to 284–294 (PQAYFNYQRKS). Residues 295–315 (TVGWSIGNILLDFTGGSLDIL) traverse the membrane as a helical segment. The Lumenal segment spans residues 316–336 (QMVLQAINVNDWSAFYANPVK). The helical transmembrane segment at 337–357 (FGLGFVSIFFDIIFMIQHYAL) threads the bilayer. Residues 358-403 (YPDAEVPHNEYHGVDNPDPDSIVRDAEHGAADNESMESTDPIIVHD) are Cytoplasmic-facing. Positions 374 to 388 (PDPDSIVRDAEHGAA) are enriched in basic and acidic residues. The segment at 374-403 (PDPDSIVRDAEHGAADNESMESTDPIIVHD) is disordered.

This sequence belongs to the cystinosin family.

The protein localises to the lysosome membrane. It is found in the cytoplasmic vesicle. It localises to the phagosome. It catalyses the reaction L-cystine(out) + H(+)(out) = L-cystine(in) + H(+)(in). In terms of biological role, cystine/H(+) symporter that mediates export of cystine, the oxidized dimer of cysteine, from lysosomes. May play a role in the degradation of engulfed apoptotic cells. The protein is Cystinosin homolog (ctns-1) of Caenorhabditis briggsae.